The following is a 183-amino-acid chain: Ferredoxin-2, mitochondrial (183 aa).

The N-terminal 52 residues, 1–52, are a transit peptide targeting the mitochondrion; that stretch reads MAASVAWGGVNAGFLLRAARGAWWSRPGGFWGSGEAAAPAIARKFRATGSRP. The 2Fe-2S ferredoxin-type domain occupies 68–170; that stretch reads VNVVFVDRSG…GAEFTLPKIT (103 aa). [2Fe-2S] cluster is bound by residues Cys105, Cys111, Cys114, and Cys151.

Belongs to the adrenodoxin/putidaredoxin family. In terms of assembly, component of the mitochondrial core iron-sulfur cluster (ISC) complex composed of NFS1, LYRM4, NDUFAB1, ISCU, FXN, and FDX2; this complex is a heterohexamer containing two copies of each monomer. Form a heterodimer complex with NFS1. Interacts (in both their reduced and oxidized states) with the cysteine desulfurase (NFS1:LYRM4) complex; this interaction stimulates cysteine desulfurase activity, and serves as a reductant for Fe-S cluster assembly. Requires [2Fe-2S] cluster as cofactor.

The protein resides in the mitochondrion. It is found in the mitochondrion matrix. In terms of biological role, electron donor, of the core iron-sulfur cluster (ISC) assembly complex, that acts to reduce the persulfide into sulfide during [2Fe-2S] clusters assembly on the scaffolding protein ISCU. The core iron-sulfur cluster (ISC) assembly complex is involved in the de novo synthesis of a [2Fe-2S] cluster, the first step of the mitochondrial iron-sulfur protein biogenesis. This process is initiated by the cysteine desulfurase complex (NFS1:LYRM4:NDUFAB1) that produces persulfide which is delivered on the scaffold protein ISCU in a FXN-dependent manner. Then this complex is stabilized by FDX2 which provides reducing equivalents to accomplish the [2Fe-2S] cluster assembly. Finally, the [2Fe-2S] cluster is transferred from ISCU to chaperone proteins, including HSCB, HSPA9 and GLRX5. Essential for coenzyme Q biosynthesis: together with FDXR, transfers the electrons required for the hydroxylation reaction performed by COQ6. This is Ferredoxin-2, mitochondrial from Bos taurus (Bovine).